The primary structure comprises 123 residues: WAP four-disulfide core domain protein 5 (123 aa).

An N-terminal signal peptide occupies residues 1 to 24 (MRIQSLLLLGALLAVGSQLPAVFG). 2 WAP domains span residues 27–73 (KGEK…CVPR) and 74–121 (VSVK…RDPA). 8 cysteine pairs are disulfide-bonded: cysteine 34–cysteine 62, cysteine 41–cysteine 66, cysteine 49–cysteine 61, cysteine 55–cysteine 70, cysteine 81–cysteine 109, cysteine 88–cysteine 113, cysteine 96–cysteine 108, and cysteine 102–cysteine 117.

Its subcellular location is the secreted. Its function is as follows. Putative acid-stable proteinase inhibitor. This Papio anubis (Olive baboon) protein is WAP four-disulfide core domain protein 5 (WFDC5).